A 711-amino-acid chain; its full sequence is Polyribonucleotide nucleotidyltransferase (711 aa).

The Mg(2+) site is built by Asp490 and Asp496. Positions 557–619 constitute a KH domain; sequence PRIETMTIPK…KCIDDAMRII (63 aa). Positions 629-699 constitute an S1 motif domain; that stretch reads GEVYVGKVRS…KTGKFKLSHK (71 aa).

The protein belongs to the polyribonucleotide nucleotidyltransferase family. Requires Mg(2+) as cofactor.

The protein localises to the cytoplasm. The catalysed reaction is RNA(n+1) + phosphate = RNA(n) + a ribonucleoside 5'-diphosphate. Involved in mRNA degradation. Catalyzes the phosphorolysis of single-stranded polyribonucleotides processively in the 3'- to 5'-direction. This chain is Polyribonucleotide nucleotidyltransferase, found in Phocaeicola vulgatus (strain ATCC 8482 / DSM 1447 / JCM 5826 / CCUG 4940 / NBRC 14291 / NCTC 11154) (Bacteroides vulgatus).